The sequence spans 788 residues: Multi-functional prenyltransferase ltmE (788 aa).

Lysine 18 and histidine 51 together coordinate substrate. Aspartate 58 lines the Mg(2+) pocket. Substrate-binding residues include arginine 67, lysine 151, threonine 152, glutamine 182, asparagine 189, and lysine 199. Positions aspartate 283–serine 337 are disordered. The segment covering histidine 299 to serine 314 has biased composition (basic and acidic residues). Over residues alanine 316–serine 337 the composition is skewed to polar residues. Residue methionine 404–alanine 405 coordinates L-tryptophan. Positions 427, 599, 601, 603, and 687 each coordinate substrate.

It in the N-terminal section; belongs to the FPP/GGPP synthase family. In the C-terminal section; belongs to the tryptophan dimethylallyltransferase family. The cofactor is Mg(2+).

It functions in the pathway secondary metabolite biosynthesis. Multi-functional prenyltransferase; part of the gene cluster that mediates the biosynthesis of lolitrems, indole-diterpene mycotoxins that are potent tremorgens in mammals, and are synthesized by clavicipitaceous fungal endophytes in association with their grass hosts. The geranylgeranyl diphosphate (GGPP) synthase ltmG is proposed to catalyze the first step in lolitrem biosynthesis. LtmG catalyzes a series of iterative condensations of isopentenyl diphosphate (IPP) with dimethylallyl diphosphate (DMAPP), geranyl diphosphate (GPP), and farnesyl diphosphate (FPP), to form GGPP. GGPP then condenses with indole-3-glycerol phosphate to form 3-geranylgeranylindole, an acyclic intermediate, to be incorporated into paxilline. Either ltmG or ltmC could be responsible for this step, as both are putative prenyl transferases. The FAD-dependent monooxygenase ltmM then catalyzes the epoxidation of the two terminal alkenes of the geranylgeranyl moiety, which is subsequently cyclized by ltmB, to paspaline. The cytochrome P450 monooxygenases ltmQ and ltmP can sequentially oxidize paspaline to terpendole E and terpendole F. Alternatively, ltmP converts paspaline to an intermediate which is oxidized by ltmQ to terpendole F. LtmF, ltmK, ltmE and ltmJ appear to be unique to the epichloe endophytes. The prenyltransferase ltmF is involved in the 27-hydroxyl-O-prenylation. The cytochrome P450 monooxygenase ltmK is required for the oxidative acetal ring formation. The multi-functional prenyltransferase ltmE is required for C20- and C21-prenylations of the indole ring of paspalanes and acts together with the cytochrome P450 monooxygenase ltmJ to yield lolitremanes by multiple oxidations and ring closures. The stereoisomer pairs of lolitriol and lolitrem N or lolitrem B and lolitrem F may be attributed to variations in the way in which ring closure can occur under the action of ltmJ. While the major product of this pathway is lolitrem B, the prenyl transferases and cytochrome P450 monooxygenases identified in this pathway have a remarkable versatility in their regio- and stereo-specificities to generate a diverse range of metabolites that are products of a metabolic grid rather than a linear pathway. This is Multi-functional prenyltransferase ltmE from Epichloe festucae var. lolii (Neotyphodium lolii).